The primary structure comprises 235 residues: tRNA pseudouridine synthase B (235 aa).

Asp-48 serves as the catalytic Nucleophile.

This sequence belongs to the pseudouridine synthase TruB family. Type 1 subfamily.

It carries out the reaction uridine(55) in tRNA = pseudouridine(55) in tRNA. Functionally, responsible for synthesis of pseudouridine from uracil-55 in the psi GC loop of transfer RNAs. The chain is tRNA pseudouridine synthase B from Parabacteroides distasonis (strain ATCC 8503 / DSM 20701 / CIP 104284 / JCM 5825 / NCTC 11152).